A 296-amino-acid polypeptide reads, in one-letter code: Ribosomal RNA small subunit methyltransferase A (296 aa).

S-adenosyl-L-methionine contacts are provided by N32, L34, G59, E80, D105, and N130.

This sequence belongs to the class I-like SAM-binding methyltransferase superfamily. rRNA adenine N(6)-methyltransferase family. RsmA subfamily.

The protein resides in the cytoplasm. The catalysed reaction is adenosine(1518)/adenosine(1519) in 16S rRNA + 4 S-adenosyl-L-methionine = N(6)-dimethyladenosine(1518)/N(6)-dimethyladenosine(1519) in 16S rRNA + 4 S-adenosyl-L-homocysteine + 4 H(+). Functionally, specifically dimethylates two adjacent adenosines (A1518 and A1519) in the loop of a conserved hairpin near the 3'-end of 16S rRNA in the 30S particle. May play a critical role in biogenesis of 30S subunits. This Levilactobacillus brevis (strain ATCC 367 / BCRC 12310 / CIP 105137 / JCM 1170 / LMG 11437 / NCIMB 947 / NCTC 947) (Lactobacillus brevis) protein is Ribosomal RNA small subunit methyltransferase A.